A 235-amino-acid polypeptide reads, in one-letter code: Phosphoribosylaminoimidazole-succinocarboxamide synthase (235 aa).

It belongs to the SAICAR synthetase family.

The catalysed reaction is 5-amino-1-(5-phospho-D-ribosyl)imidazole-4-carboxylate + L-aspartate + ATP = (2S)-2-[5-amino-1-(5-phospho-beta-D-ribosyl)imidazole-4-carboxamido]succinate + ADP + phosphate + 2 H(+). It functions in the pathway purine metabolism; IMP biosynthesis via de novo pathway; 5-amino-1-(5-phospho-D-ribosyl)imidazole-4-carboxamide from 5-amino-1-(5-phospho-D-ribosyl)imidazole-4-carboxylate: step 1/2. The protein is Phosphoribosylaminoimidazole-succinocarboxamide synthase of Chlorobium chlorochromatii (strain CaD3).